Consider the following 379-residue polypeptide: DNA replication and repair protein RecF (379 aa).

34 to 41 (GDNGAGKT) lines the ATP pocket.

It belongs to the RecF family.

It is found in the cytoplasm. Its function is as follows. The RecF protein is involved in DNA metabolism; it is required for DNA replication and normal SOS inducibility. RecF binds preferentially to single-stranded, linear DNA. It also seems to bind ATP. This Mesorhizobium japonicum (strain LMG 29417 / CECT 9101 / MAFF 303099) (Mesorhizobium loti (strain MAFF 303099)) protein is DNA replication and repair protein RecF.